The following is a 648-amino-acid chain: Threonine--tRNA ligase (648 aa).

The TGS domain maps to 1–61; sequence MIDIILPDGS…INTATVKAIT (61 aa). Residues 243-549 are catalytic; that stretch reads DHRKLGRELE…LIEHYSGRLP (307 aa). Residues C349, H400, and H526 each coordinate Zn(2+).

Belongs to the class-II aminoacyl-tRNA synthetase family. Homodimer. Requires Zn(2+) as cofactor.

The protein localises to the cytoplasm. The enzyme catalyses tRNA(Thr) + L-threonine + ATP = L-threonyl-tRNA(Thr) + AMP + diphosphate + H(+). In terms of biological role, catalyzes the attachment of threonine to tRNA(Thr) in a two-step reaction: L-threonine is first activated by ATP to form Thr-AMP and then transferred to the acceptor end of tRNA(Thr). Also edits incorrectly charged L-seryl-tRNA(Thr). The protein is Threonine--tRNA ligase of Orientia tsutsugamushi (strain Boryong) (Rickettsia tsutsugamushi).